The following is a 358-amino-acid chain: Putative ankyrin repeat protein FPV242 (358 aa).

10 ANK repeats span residues 6–35, 40–69, 91–118, 119–147, 149–177, 180–209, 214–243, 248–277, 280–312, and 316–345; these read NNYR…NMIV, NNHT…NLVY, TRRN…DKGV, ELTG…SVEY, GFFP…DINK, CGET…DIEK, EQDP…SIDT, NHKP…NPFI, EGNT…RLPG, and YYIQ…RITS.

This is Putative ankyrin repeat protein FPV242 from Fowlpox virus (strain NVSL) (FPV).